A 202-amino-acid chain; its full sequence is Ras-related protein ORAB-1 (202 aa).

GTP contacts are provided by residues 15 to 23, 33 to 40, 63 to 67, 121 to 124, and 151 to 153; these read GDSGVGKSC, YTESYIST, DTAGQ, NKCD, and SAK. Positions 37-45 match the Effector region motif; the sequence is YISTIGVDF. The interval 173-202 is disordered; that stretch reads MGPGATSGGSEKSNVNIQSTPVKSSGGGCC. Over residues 180 to 195 the composition is skewed to polar residues; that stretch reads GGSEKSNVNIQSTPVK. Residues Cys-201 and Cys-202 are each lipidated (S-geranylgeranyl cysteine).

This sequence belongs to the small GTPase superfamily. Rab family.

The protein resides in the cell membrane. In terms of biological role, protein transport. Probably involved in vesicular traffic. In Diplobatis ommata (Ocellated electric ray), this protein is Ras-related protein ORAB-1.